The following is a 426-amino-acid chain: COP9 signalosome complex subunit 6 (426 aa).

In terms of domain architecture, MPN spans 14-155; it reads VLLHPLVIMQ…AGTTRKLPLF (142 aa). A disordered region spans residues 320 to 426; that stretch reads PVRFKSQHLG…NESDESSQAS (107 aa). A compositionally biased stretch (acidic residues) spans 334-347; it reads ADDDDYFDDEDLEN.

Belongs to the peptidase M67A family. CSN6 subfamily. In terms of assembly, component of the CSN complex, probably composed of csn-1, csn-2, csn-3, csn-4, csn-5, csn-6 and csn-7. Within the complex it probably interacts directly with csn-2 and csn-4. Interacts with rbx-1.

Its subcellular location is the cytoplasm. The protein resides in the nucleus. Its function is as follows. Component of the COP9 signalosome complex (CSN), a complex involved in various cellular and developmental processes. The CSN complex is an essential regulator of the ubiquitin (Ubl) conjugation pathway by mediating the deneddylation of the cullin subunits of the SCF-type E3 ligase complexes, leading to decrease the Ubl ligase activity of SCF. The CSN complex plays an essential role in embryogenesis and oogenesis and is required to regulate microtubule stability in the early embryo. Mediates mei-3/katanin targeting for degradation at the meiosis to mitosis transition via deneddylation of cul-3. This chain is COP9 signalosome complex subunit 6 (csn-6), found in Caenorhabditis elegans.